The sequence spans 120 residues: Immunoglobulin kappa variable 2-112 (120 aa).

Positions 1–20 (MRCSLQFLGVLMFWISGVSG) are cleaved as a signal peptide. The framework-1 stretch occupies residues 21–43 (DIVITQDELSNPVTSGESVSISC). A disulfide bridge connects residues C43 and C113. The segment at 44–59 (RSSKSLLYKDGKTYLN) is complementarity-determining-1. Residues 60 to 74 (WFLQRPGQSPQLLIY) form a framework-2 region. The complementarity-determining-2 stretch occupies residues 75–81 (LMSTRAS). The segment at 82–113 (GVSDRFSGSGSGTDFTLEISRVKAEDVGVYYC) is framework-3. The complementarity-determining-3 stretch occupies residues 114-120 (QQLVEYP).

This is Immunoglobulin kappa variable 2-112 from Mus musculus (Mouse).